The chain runs to 137 residues: Nucleoside diphosphate kinase (137 aa).

6 residues coordinate ATP: K10, F59, R87, T93, R104, and N114. H117 acts as the Pros-phosphohistidine intermediate in catalysis.

Belongs to the NDK family. As to quaternary structure, homotetramer. The cofactor is Mg(2+).

It is found in the cytoplasm. The enzyme catalyses a 2'-deoxyribonucleoside 5'-diphosphate + ATP = a 2'-deoxyribonucleoside 5'-triphosphate + ADP. It carries out the reaction a ribonucleoside 5'-diphosphate + ATP = a ribonucleoside 5'-triphosphate + ADP. Its function is as follows. Major role in the synthesis of nucleoside triphosphates other than ATP. The ATP gamma phosphate is transferred to the NDP beta phosphate via a ping-pong mechanism, using a phosphorylated active-site intermediate. This chain is Nucleoside diphosphate kinase, found in Streptomyces coelicolor (strain ATCC BAA-471 / A3(2) / M145).